A 325-amino-acid polypeptide reads, in one-letter code: Tetraacyldisaccharide 4'-kinase (325 aa).

58-65 is a binding site for ATP; that stretch reads TVGGSGKT.

The protein belongs to the LpxK family.

The catalysed reaction is a lipid A disaccharide + ATP = a lipid IVA + ADP + H(+). Its pathway is glycolipid biosynthesis; lipid IV(A) biosynthesis; lipid IV(A) from (3R)-3-hydroxytetradecanoyl-[acyl-carrier-protein] and UDP-N-acetyl-alpha-D-glucosamine: step 6/6. Transfers the gamma-phosphate of ATP to the 4'-position of a tetraacyldisaccharide 1-phosphate intermediate (termed DS-1-P) to form tetraacyldisaccharide 1,4'-bis-phosphate (lipid IVA). This is Tetraacyldisaccharide 4'-kinase from Coxiella burnetii (strain Dugway 5J108-111).